The chain runs to 1021 residues: Chondroitin sulfate ABC endolyase (1021 aa).

The first 24 residues, 1–24, serve as a signal peptide directing secretion; that stretch reads MPIFRFTALAMTLGLLSAPYNAMA. His43, Met70, Gln73, and Asp211 together coordinate Na(+). The active-site Proton acceptor is the His501. Tyr508 acts as the Proton donor in catalysis.

The protein belongs to the polysaccharide lyase 8 family. In terms of assembly, monomer.

The protein localises to the periplasm. It catalyses the reaction Endolytic cleavage of (1-&gt;4)-beta-galactosaminic bonds between N-acetylgalactosamine and either D-glucuronic acid or L-iduronic acid to produce a mixture of Delta(4)-unsaturated oligosaccharides of different sizes that are ultimately degraded to Delta(4)-unsaturated tetra- and disaccharides.. Is inhibited by Zn(2+), Ni(2+), Fe(2+) and Cu(2+). In terms of biological role, endolytic, broad-specificity glycosaminoglycan lyase, which degrades the polysaccharides chondroitin, chondroitin-4-sulfate, chondroitin-6-sulfate, dermatan sulfate and to a lesser extent hyaluronan, by beta-elimination of 1,4-hexosaminidic bond to unsaturated tetrasaccharides and disaccharides. Is not active against keratan sulfate, heparan sulfate, and heparin. Is able to promote functional recovery in the injured central nervous system (CNS), via its role in the disruption of the normal organization of the extracellular matrix (ECM). This Proteus vulgaris protein is Chondroitin sulfate ABC endolyase.